The sequence spans 129 residues: Small ribosomal subunit protein uS11 (129 aa).

This sequence belongs to the universal ribosomal protein uS11 family. As to quaternary structure, part of the 30S ribosomal subunit. Interacts with proteins S7 and S18. Binds to IF-3.

In terms of biological role, located on the platform of the 30S subunit, it bridges several disparate RNA helices of the 16S rRNA. Forms part of the Shine-Dalgarno cleft in the 70S ribosome. This Bacillus cytotoxicus (strain DSM 22905 / CIP 110041 / 391-98 / NVH 391-98) protein is Small ribosomal subunit protein uS11.